A 470-amino-acid polypeptide reads, in one-letter code: Ribulose bisphosphate carboxylase large chain (470 aa).

N6,N6,N6-trimethyllysine is present on lysine 5. Substrate is bound by residues asparagine 114 and threonine 164. Residue lysine 166 is the Proton acceptor of the active site. Residue lysine 168 participates in substrate binding. Residues lysine 192, aspartate 194, and glutamate 195 each coordinate Mg(2+). Lysine 192 is subject to N6-carboxylysine. Catalysis depends on histidine 285, which acts as the Proton acceptor. Positions 286, 318, and 370 each coordinate substrate.

The protein belongs to the RuBisCO large chain family. Type I subfamily. Heterohexadecamer of 8 large chains and 8 small chains; disulfide-linked. The disulfide link is formed within the large subunit homodimers. Mg(2+) is required as a cofactor. The disulfide bond which can form in the large chain dimeric partners within the hexadecamer appears to be associated with oxidative stress and protein turnover.

It localises to the plastid. It is found in the chloroplast. The catalysed reaction is 2 (2R)-3-phosphoglycerate + 2 H(+) = D-ribulose 1,5-bisphosphate + CO2 + H2O. It carries out the reaction D-ribulose 1,5-bisphosphate + O2 = 2-phosphoglycolate + (2R)-3-phosphoglycerate + 2 H(+). RuBisCO catalyzes two reactions: the carboxylation of D-ribulose 1,5-bisphosphate, the primary event in carbon dioxide fixation, as well as the oxidative fragmentation of the pentose substrate in the photorespiration process. Both reactions occur simultaneously and in competition at the same active site. The protein is Ribulose bisphosphate carboxylase large chain of Kigelia africana (Sausage tree).